Reading from the N-terminus, the 536-residue chain is Chaperonin GroEL 2 (536 aa).

ATP is bound by residues 29–32 (TLGP), Lys50, Gly416, and Asp497.

This sequence belongs to the chaperonin (HSP60) family. As to quaternary structure, forms a cylinder of 14 subunits composed of two heptameric rings stacked back-to-back. Interacts with the co-chaperonin GroES.

It localises to the cytoplasm. It catalyses the reaction ATP + H2O + a folded polypeptide = ADP + phosphate + an unfolded polypeptide.. In terms of biological role, together with its co-chaperonin GroES, plays an essential role in assisting protein folding. The GroEL-GroES system forms a nano-cage that allows encapsulation of the non-native substrate proteins and provides a physical environment optimized to promote and accelerate protein folding. The polypeptide is Chaperonin GroEL 2 (Chlamydia caviae (strain ATCC VR-813 / DSM 19441 / 03DC25 / GPIC) (Chlamydophila caviae)).